We begin with the raw amino-acid sequence, 225 residues long: Rho GDP-dissociation inhibitor 3 (225 aa).

It belongs to the Rho GDI family. Primarily expressed in pancreas and brain.

The protein resides in the cytoplasm. In terms of biological role, inhibits GDP/GTP exchange reaction of RhoB. Interacts specifically with the GDP- and GTP-bound forms of post-translationally processed Rhob and Rhog proteins, both of which show a growth-regulated expression in mammalian cells. Stimulates the release of the GDP-bound but not the GTP-bound RhoB protein. Also inhibits the GDP/GTP exchange of RhoB but shows less ability to inhibit the dissociation of prebound GTP. This is Rho GDP-dissociation inhibitor 3 (ARHGDIG) from Homo sapiens (Human).